Reading from the N-terminus, the 121-residue chain is Large ribosomal subunit protein uL18 (121 aa).

Belongs to the universal ribosomal protein uL18 family. In terms of assembly, part of the 50S ribosomal subunit; part of the 5S rRNA/L5/L18/L25 subcomplex. Contacts the 5S and 23S rRNAs.

Its function is as follows. This is one of the proteins that bind and probably mediate the attachment of the 5S RNA into the large ribosomal subunit, where it forms part of the central protuberance. The sequence is that of Large ribosomal subunit protein uL18 from Bdellovibrio bacteriovorus (strain ATCC 15356 / DSM 50701 / NCIMB 9529 / HD100).